Consider the following 330-residue polypeptide: Probable deoxyhypusine synthase (330 aa).

The active-site Nucleophile is the Lys303.

This sequence belongs to the deoxyhypusine synthase family. NAD(+) is required as a cofactor.

It catalyses the reaction [eIF5A protein]-L-lysine + spermidine = [eIF5A protein]-deoxyhypusine + propane-1,3-diamine. The protein operates within protein modification; eIF5A hypusination. Its function is as follows. Catalyzes the NAD-dependent oxidative cleavage of spermidine and the subsequent transfer of the butylamine moiety of spermidine to the epsilon-amino group of a specific lysine residue of the eIF-5A precursor protein to form the intermediate deoxyhypusine residue. This is Probable deoxyhypusine synthase (dys) from Methanocaldococcus jannaschii (strain ATCC 43067 / DSM 2661 / JAL-1 / JCM 10045 / NBRC 100440) (Methanococcus jannaschii).